Here is a 287-residue protein sequence, read N- to C-terminus: ATP synthase gamma chain (287 aa).

It belongs to the ATPase gamma chain family. F-type ATPases have 2 components, CF(1) - the catalytic core - and CF(0) - the membrane proton channel. CF(1) has five subunits: alpha(3), beta(3), gamma(1), delta(1), epsilon(1). CF(0) has three main subunits: a, b and c.

It is found in the cell inner membrane. Its function is as follows. Produces ATP from ADP in the presence of a proton gradient across the membrane. The gamma chain is believed to be important in regulating ATPase activity and the flow of protons through the CF(0) complex. The polypeptide is ATP synthase gamma chain (Citrobacter koseri (strain ATCC BAA-895 / CDC 4225-83 / SGSC4696)).